Consider the following 382-residue polypeptide: Carbamoyl phosphate synthase small chain (382 aa).

Residues 1–189 (MIKSALLVLE…GLPEAKKEDE (189 aa)) form a CPSase region. Residues Ser-47, Gly-241, and Gly-243 each contribute to the L-glutamine site. Residues 193–380 (HVVAYDFGAK…IALIEQYRKT (188 aa)) form the Glutamine amidotransferase type-1 domain. The Nucleophile role is filled by Cys-269. The L-glutamine site is built by Leu-270, Gln-273, Asn-311, Gly-313, and Phe-314. Active-site residues include His-353 and Glu-355.

Belongs to the CarA family. Composed of two chains; the small (or glutamine) chain promotes the hydrolysis of glutamine to ammonia, which is used by the large (or ammonia) chain to synthesize carbamoyl phosphate. Tetramer of heterodimers (alpha,beta)4.

The enzyme catalyses hydrogencarbonate + L-glutamine + 2 ATP + H2O = carbamoyl phosphate + L-glutamate + 2 ADP + phosphate + 2 H(+). It catalyses the reaction L-glutamine + H2O = L-glutamate + NH4(+). It functions in the pathway amino-acid biosynthesis; L-arginine biosynthesis; carbamoyl phosphate from bicarbonate: step 1/1. Its pathway is pyrimidine metabolism; UMP biosynthesis via de novo pathway; (S)-dihydroorotate from bicarbonate: step 1/3. Functionally, small subunit of the glutamine-dependent carbamoyl phosphate synthetase (CPSase). CPSase catalyzes the formation of carbamoyl phosphate from the ammonia moiety of glutamine, carbonate, and phosphate donated by ATP, constituting the first step of 2 biosynthetic pathways, one leading to arginine and/or urea and the other to pyrimidine nucleotides. The small subunit (glutamine amidotransferase) binds and cleaves glutamine to supply the large subunit with the substrate ammonia. The sequence is that of Carbamoyl phosphate synthase small chain from Escherichia coli O6:H1 (strain CFT073 / ATCC 700928 / UPEC).